The chain runs to 432 residues: D-amino acid dehydrogenase (432 aa).

Val3 to Tyr17 provides a ligand contact to FAD.

It belongs to the DadA oxidoreductase family. Requires FAD as cofactor.

It catalyses the reaction a D-alpha-amino acid + A + H2O = a 2-oxocarboxylate + AH2 + NH4(+). The protein operates within amino-acid degradation; D-alanine degradation; NH(3) and pyruvate from D-alanine: step 1/1. Functionally, oxidative deamination of D-amino acids. The chain is D-amino acid dehydrogenase from Delftia acidovorans (strain DSM 14801 / SPH-1).